We begin with the raw amino-acid sequence, 346 residues long: SUMO-activating enzyme subunit 1 (346 aa).

Methionine 1 bears the N-acetylmethionine mark. Valine 2 is modified (N-acetylvaline; in SUMO-activating enzyme subunit 1, N-terminally processed). Serine 12 bears the Phosphoserine mark. The residue at position 198 (lysine 198) is an N6-acetyllysine.

It belongs to the ubiquitin-activating E1 family. In terms of assembly, heterodimer of SAE1 and UBA2/SAE2. The heterodimer corresponds to the two domains that are encoded on a single polypeptide chain in ubiquitin-activating enzyme E1. Interacts with UBE2I.

The protein localises to the nucleus. Its pathway is protein modification; protein sumoylation. In terms of biological role, the heterodimer acts as an E1 ligase for SUMO1, SUMO2, SUMO3, and probably SUMO4. It mediates ATP-dependent activation of SUMO proteins followed by formation of a thioester bond between a SUMO protein and a conserved active site cysteine residue on UBA2/SAE2. The sequence is that of SUMO-activating enzyme subunit 1 (SAE1) from Bos taurus (Bovine).